Here is a 223-residue protein sequence, read N- to C-terminus: 2-C-methyl-D-erythritol 4-phosphate cytidylyltransferase (223 aa).

The protein belongs to the IspD/TarI cytidylyltransferase family. IspD subfamily.

The catalysed reaction is 2-C-methyl-D-erythritol 4-phosphate + CTP + H(+) = 4-CDP-2-C-methyl-D-erythritol + diphosphate. It functions in the pathway isoprenoid biosynthesis; isopentenyl diphosphate biosynthesis via DXP pathway; isopentenyl diphosphate from 1-deoxy-D-xylulose 5-phosphate: step 2/6. In terms of biological role, catalyzes the formation of 4-diphosphocytidyl-2-C-methyl-D-erythritol from CTP and 2-C-methyl-D-erythritol 4-phosphate (MEP). The protein is 2-C-methyl-D-erythritol 4-phosphate cytidylyltransferase of Prochlorococcus marinus (strain AS9601).